The sequence spans 142 residues: Large ribosomal subunit protein uL11 (142 aa).

It belongs to the universal ribosomal protein uL11 family. Part of the ribosomal stalk of the 50S ribosomal subunit. Interacts with L10 and the large rRNA to form the base of the stalk. L10 forms an elongated spine to which L12 dimers bind in a sequential fashion forming a multimeric L10(L12)X complex. One or more lysine residues are methylated.

In terms of biological role, forms part of the ribosomal stalk which helps the ribosome interact with GTP-bound translation factors. The protein is Large ribosomal subunit protein uL11 of Colwellia psychrerythraea (strain 34H / ATCC BAA-681) (Vibrio psychroerythus).